Consider the following 504-residue polypeptide: Cytochrome P450 71B7 (504 aa).

The chain crosses the membrane as a helical span at residues methionine 1 to leucine 21. Lysine 82 participates in a covalent cross-link: Glycyl lysine isopeptide (Lys-Gly) (interchain with G-Cter in ubiquitin). A heme-binding site is contributed by cysteine 446.

The protein belongs to the cytochrome P450 family. Requires heme as cofactor. In terms of tissue distribution, highly expressed in rosette leaves. Also expressed in roots, leaves, flowers, and siliques.

Its subcellular location is the membrane. The polypeptide is Cytochrome P450 71B7 (CYP71B7) (Arabidopsis thaliana (Mouse-ear cress)).